The chain runs to 561 residues: Glucose-6-phosphate isomerase (561 aa).

D-glucose 6-phosphate contacts are provided by residues 171 to 172 (GS), 222 to 227 (SKTFTT), Q366, E370, H401, and K525. Catalysis depends on E370, which acts as the Proton donor. Catalysis depends on residues H401 and K525.

It belongs to the GPI family. Homodimer.

The protein localises to the cytoplasm. Its subcellular location is the cytosol. The catalysed reaction is alpha-D-glucose 6-phosphate = beta-D-fructose 6-phosphate. It functions in the pathway carbohydrate degradation; glycolysis; D-glyceraldehyde 3-phosphate and glycerone phosphate from D-glucose: step 2/4. Functionally, in the cytoplasm, catalyzes the conversion of glucose-6-phosphate to fructose-6-phosphate, the second step in glycolysis, and the reverse reaction during gluconeogenesis. This Neurospora crassa (strain ATCC 24698 / 74-OR23-1A / CBS 708.71 / DSM 1257 / FGSC 987) protein is Glucose-6-phosphate isomerase (pgi-1).